The sequence spans 214 residues: Osteoclast-stimulating factor 1 (214 aa).

An N-acetylserine modification is found at Ser2. The region spanning 12-71 is the SH3 domain; the sequence is GQVKVFRALYTFEPRTPDELYFEEGDIIYITDMSDTNWWKGTCKGRTGLIPSNYVAEQAE. ANK repeat units follow at residues 72-101, 105-135, and 139-168; these read SIDN…GVNG, AGST…ELNQ, and LGDT…RTDL. Phosphoserine occurs at positions 202 and 213.

In terms of assembly, interacts with SRC and SMN1. Interacts with FASLG.

The protein localises to the cytoplasm. Functionally, induces bone resorption, acting probably through a signaling cascade which results in the secretion of factor(s) enhancing osteoclast formation and activity. This Bos taurus (Bovine) protein is Osteoclast-stimulating factor 1 (OSTF1).